We begin with the raw amino-acid sequence, 418 residues long: Transmembrane protease serine 11D (418 aa).

Residues methionine 1–cysteine 20 lie on the Cytoplasmic side of the membrane. The chain crosses the membrane as a helical; Signal-anchor for type II membrane protein span at residues phenylalanine 21–leucine 41. The Extracellular segment spans residues alanine 42 to isoleucine 418. The SEA domain occupies lysine 46–glutamine 163. Residue asparagine 144 is glycosylated (N-linked (GlcNAc...) asparagine). 4 cysteine pairs are disulfide-bonded: cysteine 173–cysteine 292, cysteine 212–cysteine 228, cysteine 337–cysteine 353, and cysteine 364–cysteine 393. The region spanning isoleucine 187–glycine 417 is the Peptidase S1 domain. Catalysis depends on charge relay system residues histidine 227 and aspartate 272. The active-site Charge relay system is serine 368.

Belongs to the peptidase S1 family. As to quaternary structure, monomer. Located in the cells of the submucosal serous glands of the bronchi and trachea.

Its subcellular location is the cell membrane. The protein localises to the secreted. With respect to regulation, strongly inhibited by diisopropyl fluorophosphate, leupeptin, antipain, aprotinin, and soybean trypsin inhibitor, but hardly inhibited by secretory leukocyte protease inhibitor at 10 microM. In terms of biological role, may play some biological role in the host defense system on the mucous membrane independently of or in cooperation with other substances in airway mucous or bronchial secretions. Plays a role in the proteolytic processing of ACE2. Proteolytically cleaves and activates the human coronavirus 229E (HCoV-229E) spike glycoprotein which facilitate virus-cell membrane fusions; spike proteins are synthesized and maintained in precursor intermediate folding states and proteolysis permits the refolding and energy release required to create stable virus-cell linkages and membrane coalescence. Preferentially cleaves the C-terminal side of arginine residues at the P1 position of certain peptides, cleaving Boc-Phe-Ser-Arg-4-methylcoumaryl-7-amide most efficiently and having an optimum pH of 8.6 with this substrate. This is Transmembrane protease serine 11D (TMPRSS11D) from Homo sapiens (Human).